We begin with the raw amino-acid sequence, 198 residues long: Glycerol-3-phosphate acyltransferase (198 aa).

Helical transmembrane passes span V3–V23, L81–F101, V113–A133, and Y153–V175.

This sequence belongs to the PlsY family. In terms of assembly, probably interacts with PlsX.

The protein localises to the cell inner membrane. It catalyses the reaction an acyl phosphate + sn-glycerol 3-phosphate = a 1-acyl-sn-glycero-3-phosphate + phosphate. The protein operates within lipid metabolism; phospholipid metabolism. Its function is as follows. Catalyzes the transfer of an acyl group from acyl-phosphate (acyl-PO(4)) to glycerol-3-phosphate (G3P) to form lysophosphatidic acid (LPA). This enzyme utilizes acyl-phosphate as fatty acyl donor, but not acyl-CoA or acyl-ACP. The polypeptide is Glycerol-3-phosphate acyltransferase (Methylococcus capsulatus (strain ATCC 33009 / NCIMB 11132 / Bath)).